The sequence spans 284 residues: Formamidopyrimidine-DNA glycosylase (284 aa).

Pro2 functions as the Schiff-base intermediate with DNA in the catalytic mechanism. Catalysis depends on Glu3, which acts as the Proton donor. Residue Lys58 is the Proton donor; for beta-elimination activity of the active site. DNA is bound by residues His101, Arg120, and Arg163. The FPG-type zinc finger occupies 248–284 (RVYDRENAPCVTAGCPDVVRRVVQSGRSSFYCPSCQR). Residue Arg274 is the Proton donor; for delta-elimination activity of the active site.

It belongs to the FPG family. In terms of assembly, monomer. Requires Zn(2+) as cofactor.

The catalysed reaction is Hydrolysis of DNA containing ring-opened 7-methylguanine residues, releasing 2,6-diamino-4-hydroxy-5-(N-methyl)formamidopyrimidine.. The enzyme catalyses 2'-deoxyribonucleotide-(2'-deoxyribose 5'-phosphate)-2'-deoxyribonucleotide-DNA = a 3'-end 2'-deoxyribonucleotide-(2,3-dehydro-2,3-deoxyribose 5'-phosphate)-DNA + a 5'-end 5'-phospho-2'-deoxyribonucleoside-DNA + H(+). In terms of biological role, involved in base excision repair of DNA damaged by oxidation or by mutagenic agents. Acts as a DNA glycosylase that recognizes and removes damaged bases. Has a preference for oxidized purines, such as 7,8-dihydro-8-oxoguanine (8-oxoG). Has AP (apurinic/apyrimidinic) lyase activity and introduces nicks in the DNA strand. Cleaves the DNA backbone by beta-delta elimination to generate a single-strand break at the site of the removed base with both 3'- and 5'-phosphates. The sequence is that of Formamidopyrimidine-DNA glycosylase from Dinoroseobacter shibae (strain DSM 16493 / NCIMB 14021 / DFL 12).